The following is a 610-amino-acid chain: GPI transamidase component GPI16 (610 aa).

Positions 1–19 (MILTLAYFMLGTLLLGVFA) are cleaved as a signal peptide. Residues 20 to 551 (EDTVSQIGIN…STPDFSMPYN (532 aa)) lie on the Lumenal side of the membrane. Residue N184 is glycosylated (N-linked (GlcNAc...) asparagine). Residues 552–572 (VIILTSTIMGLIFGMLYNLMV) traverse the membrane as a helical segment. The Cytoplasmic portion of the chain corresponds to 573–610 (KRMVTVEEADKITLQSGLKYKLLKLKEKFLGKKKTKTD).

The protein belongs to the PIGT family. As to quaternary structure, forms a complex with CDC91, GPI17, GPI8 and GAA1. In terms of processing, the disulfide bond between GPI8 and GPI16 is important for normal enzyme activity.

It is found in the endoplasmic reticulum membrane. Its pathway is glycolipid biosynthesis; glycosylphosphatidylinositol-anchor biosynthesis. Functionally, component of the GPI transamidase complex. Involved in transfer of GPI to proteins. This Saccharomyces cerevisiae (strain ATCC 204508 / S288c) (Baker's yeast) protein is GPI transamidase component GPI16 (GPI16).